Here is a 220-residue protein sequence, read N- to C-terminus: 7-cyano-7-deazaguanine synthase (220 aa).

Position 10–20 (phenylalanine 10–leucine 20) interacts with ATP. Cysteine 186, cysteine 195, cysteine 198, and cysteine 201 together coordinate Zn(2+).

The protein belongs to the QueC family. As to quaternary structure, homodimer. Zn(2+) is required as a cofactor.

The enzyme catalyses 7-carboxy-7-deazaguanine + NH4(+) + ATP = 7-cyano-7-deazaguanine + ADP + phosphate + H2O + H(+). The protein operates within purine metabolism; 7-cyano-7-deazaguanine biosynthesis. Its function is as follows. Catalyzes the ATP-dependent conversion of 7-carboxy-7-deazaguanine (CDG) to 7-cyano-7-deazaguanine (preQ(0)). The polypeptide is 7-cyano-7-deazaguanine synthase (Bacillus thuringiensis (strain Al Hakam)).